Reading from the N-terminus, the 181-residue chain is MNQKAVILDEQAIRRALTRIAHEMIERNKGMNNCILVGIKTRGIYLAKRLAERIEQIEGNPVTVGEIDITLYRDDLSKKTSNDEPLVKGADIPVDITDQKVILVDDVLYTGRTVRAGMDALVDVGRPSSIQLAVLVDRGHRELPIRADYIGKNIPTSKSEKVMVQLDEVDQNDLVAIYENE.

Residues 41–42 (TR), 105–113 (DDVLYTGRT), R138, and V162 each bind substrate. Positions 101-113 (VILVDDVLYTGRT) match the PRPP-binding motif.

This sequence belongs to the purine/pyrimidine phosphoribosyltransferase family. PyrR subfamily. In terms of assembly, homodimer and homohexamer; in equilibrium.

It catalyses the reaction UMP + diphosphate = 5-phospho-alpha-D-ribose 1-diphosphate + uracil. Regulates transcriptional attenuation of the pyrimidine nucleotide (pyr) operon by binding in a uridine-dependent manner to specific sites on pyr mRNA. This disrupts an antiterminator hairpin in the RNA and favors formation of a downstream transcription terminator, leading to a reduced expression of downstream genes. Its function is as follows. Also displays a weak uracil phosphoribosyltransferase activity which is not physiologically significant. The protein is Bifunctional protein PyrR (pyrR) of Bacillus subtilis (strain 168).